The primary structure comprises 41 residues: Bacteriocin (41 aa).

C9 and C14 are disulfide-bonded.

It is found in the secreted. Its function is as follows. Bacteriocin active against S.aureus, S.typhi, B.thuringiensis, Klebsiella sp., E.coli KL16 and E.coli Gj137. The protein is Bacteriocin of Lactococcus sp.